A 492-amino-acid polypeptide reads, in one-letter code: MYIVQIASECAPVIKAGGLGDVVYGLSRELEIRGNCVELILPKYDCMRYDHVWGLHEAYLNLWVPWFGAAIHCTVYCGWVHGRVCFFIEPHSEDNFFNRGCYYGCDDDDMRFAFFSKAALEFLHQSNKRPDIIHCHDWQTGLIPVMLYEIYKYHGMDTQRVCYTIHNFKHQGIGGVKTLWATGLNREAYYFQDDKLRDDHNPFALNYMKGGIVYSNAVTTVSPNHALEAQYTDVGCGLGHTLYLHKEKFSGVLNGIDYDFWNPEIDRHIPDNYSQDDFEQKLYNKKALRERLLLQAADKPIIAYIGRLDNQKGVHLVHHAIYHALNKGAQFVLLGSATEAGINAHFRHEKQFLNSNPDVHLELGFNEELSHLIYAGADMIVVPSNYEPCGLTQMIGLKYGTVPIVRGVGGLVNTVFDRDYDQNLPPEKRNGYVFYQSDNQALESAMNRAIDLWYQSPEQFQQLAIQGMKYDYSWNNPGTEYLNIYEWIKYKW.

ADP-alpha-D-glucose is bound at residue lysine 15.

Belongs to the glycosyltransferase 1 family. Bacterial/plant glycogen synthase subfamily.

It carries out the reaction [(1-&gt;4)-alpha-D-glucosyl](n) + ADP-alpha-D-glucose = [(1-&gt;4)-alpha-D-glucosyl](n+1) + ADP + H(+). It functions in the pathway glycan biosynthesis; glycogen biosynthesis. Its function is as follows. Synthesizes alpha-1,4-glucan chains using ADP-glucose. This Nostoc sp. (strain PCC 7120 / SAG 25.82 / UTEX 2576) protein is Probable glycogen synthase 2 (glgA2).